A 314-amino-acid chain; its full sequence is Lipoyl synthase (314 aa).

7 residues coordinate [4Fe-4S] cluster: C60, C65, C71, C86, C90, C93, and S300. The region spanning 72–289 is the Radical SAM core domain; that stretch reads FRKGTATFMI…RQFGLSIGFS (218 aa).

This sequence belongs to the radical SAM superfamily. Lipoyl synthase family. [4Fe-4S] cluster serves as cofactor.

It localises to the cytoplasm. It carries out the reaction [[Fe-S] cluster scaffold protein carrying a second [4Fe-4S](2+) cluster] + N(6)-octanoyl-L-lysyl-[protein] + 2 oxidized [2Fe-2S]-[ferredoxin] + 2 S-adenosyl-L-methionine + 4 H(+) = [[Fe-S] cluster scaffold protein] + N(6)-[(R)-dihydrolipoyl]-L-lysyl-[protein] + 4 Fe(3+) + 2 hydrogen sulfide + 2 5'-deoxyadenosine + 2 L-methionine + 2 reduced [2Fe-2S]-[ferredoxin]. Its pathway is protein modification; protein lipoylation via endogenous pathway; protein N(6)-(lipoyl)lysine from octanoyl-[acyl-carrier-protein]: step 2/2. In terms of biological role, catalyzes the radical-mediated insertion of two sulfur atoms into the C-6 and C-8 positions of the octanoyl moiety bound to the lipoyl domains of lipoate-dependent enzymes, thereby converting the octanoylated domains into lipoylated derivatives. This is Lipoyl synthase from Pelobacter propionicus (strain DSM 2379 / NBRC 103807 / OttBd1).